Here is a 197-residue protein sequence, read N- to C-terminus: MKNIAKVTALALGIALASGYASAEEKIAFINAGYIFQHHPDRQAVADKLDAEFKPVAEKLAASKKEVDDKIAAARKKVEAKVAALEKDAPRLRQADIQKRQQEINKLGAAEDAELQKLMQEQDKKVQEFQAQNEKRQAEERGKLLDSIQTATNNLAKAKGYTYVLDANSIVFAVEGKDITEEVLKSIPASEKAQEKK.

The signal sequence occupies residues 1–23 (MKNIAKVTALALGIALASGYASA).

The protein belongs to the Skp family.

The protein localises to the cell outer membrane. The sequence is that of Outer membrane protein 26 (omp26) from Haemophilus influenzae (strain ATCC 51907 / DSM 11121 / KW20 / Rd).